A 349-amino-acid chain; its full sequence is tRNA pseudouridine synthase D (349 aa).

A substrate-binding site is contributed by F27. The Nucleophile role is filled by D80. Residue N129 participates in substrate binding. One can recognise a TRUD domain in the interval 155-303 (GVPNYFGAQR…VEAARRAMLL (149 aa)). A substrate-binding site is contributed by F329.

It belongs to the pseudouridine synthase TruD family.

The enzyme catalyses uridine(13) in tRNA = pseudouridine(13) in tRNA. In terms of biological role, responsible for synthesis of pseudouridine from uracil-13 in transfer RNAs. In Klebsiella pneumoniae subsp. pneumoniae (strain ATCC 700721 / MGH 78578), this protein is tRNA pseudouridine synthase D.